A 291-amino-acid polypeptide reads, in one-letter code: Beta-lactamase CTX-M-6 (291 aa).

Positions 1 to 28 (MMTQSIRRSMLTVMATLPLLFSSATLHA) are cleaved as a signal peptide. Ser73 acts as the Acyl-ester intermediate in catalysis. 237–239 (KTG) is a substrate binding site.

Belongs to the class-A beta-lactamase family.

The enzyme catalyses a beta-lactam + H2O = a substituted beta-amino acid. In terms of biological role, has cefotaxime-hydrolyzing activity. The polypeptide is Beta-lactamase CTX-M-6 (bla) (Salmonella typhimurium).